Reading from the N-terminus, the 118-residue chain is Putative pterin-4-alpha-carbinolamine dehydratase (118 aa).

The protein belongs to the pterin-4-alpha-carbinolamine dehydratase family.

The enzyme catalyses (4aS,6R)-4a-hydroxy-L-erythro-5,6,7,8-tetrahydrobiopterin = (6R)-L-erythro-6,7-dihydrobiopterin + H2O. The chain is Putative pterin-4-alpha-carbinolamine dehydratase from Pseudomonas putida (strain GB-1).